The primary structure comprises 144 residues: Gastric inhibitory polypeptide (144 aa).

An N-terminal signal peptide occupies residues 1-21; sequence MVALKTCSLLLVLLFLAVGLG. Propeptides lie at residues 22–42 and 87–144; these read EKEE…PRGP and EARA…LRSQ. The segment at 92 to 112 is disordered; that stretch reads ELAGQSQRNEEKEAQGSSLPK.

This sequence belongs to the glucagon family. In terms of tissue distribution, highly expressed in the duodenum and jejunum.

It localises to the secreted. Functionally, potent stimulator of insulin secretion and relatively poor inhibitor of gastric acid secretion. The protein is Gastric inhibitory polypeptide (Gip) of Rattus norvegicus (Rat).